Reading from the N-terminus, the 307-residue chain is MSSIADRKTTGITFNIQKYSVHDGPGIRTVVFLKGCPLKCRWCSNPESQRKSVELAYNTGRCLTLAKCVRCVEICTAGAISRAEDDTISIDRALCNDCEQLCSGACPSNALITYGAHKTVDEVLRAVEQDSLFYARSGGGMTISGGEPFAQPAFTLALLREARRRRVHTAVETCGYASWDDMAAALPFLNYVLYDIKNLDDARHKEATGVSNQRIVENLRALRAEFPGIPVLVRTPVIPGFNDNEADIAAIAALTRELGVSYQLLPYHRLGTQKYHFLDREAPMGEVTLDAETMRRLEAVVAQTADS.

Residues 22–307 (HDGPGIRTVV…EAVVAQTADS (286 aa)) form the Radical SAM core domain. Cys-36, Cys-40, Cys-43, Cys-62, Cys-68, Cys-71, Cys-75, Cys-95, Cys-98, Cys-102, and Cys-106 together coordinate [4Fe-4S] cluster. Position 42 to 44 (42 to 44 (WCS)) interacts with S-adenosyl-L-methionine. 4Fe-4S ferredoxin-type domains are found at residues 53–85 (VELA…RAED) and 86–117 (DTIS…YGAH). Residues Gly-146, 195–197 (DIK), and His-268 contribute to the S-adenosyl-L-methionine site.

Belongs to the organic radical-activating enzymes family. As to quaternary structure, monomer. The cofactor is [4Fe-4S] cluster.

It catalyses the reaction glycyl-[protein] + reduced [flavodoxin] + S-adenosyl-L-methionine = glycin-2-yl radical-[protein] + semiquinone [flavodoxin] + 5'-deoxyadenosine + L-methionine + H(+). Its pathway is organosulfur degradation; alkanesulfonate degradation. Its function is as follows. Involved in an anaerobic respiration pathway that converts the sulfonate isethionate (2-hydroxyethanesulfonate) to ammonia, acetate and sulfide. Catalyzes activation of the isethionate sulfite-lyase IseG under anaerobic conditions by generation of an organic free radical on a glycine residue, via a homolytic cleavage of S-adenosyl-L-methionine (SAM). This chain is Isethionate sulfite-lyase activating enzyme, found in Nitratidesulfovibrio vulgaris (strain ATCC 29579 / DSM 644 / CCUG 34227 / NCIMB 8303 / VKM B-1760 / Hildenborough) (Desulfovibrio vulgaris).